A 489-amino-acid polypeptide reads, in one-letter code: WPP domain-interacting protein 1 (489 aa).

The disordered stretch occupies residues Ser-49–Val-73. 3 short sequence motifs (nuclear localization signal) span residues Arg-80–Lys-81, Arg-83–Arg-84, and Lys-104–Arg-105. A disordered region spans residues Pro-195–Ser-264. Basic and acidic residues predominate over residues Gly-215–Asn-224. Residues Glu-323–Ile-446 adopt a coiled-coil conformation. The 31-residue stretch at Ser-459–Thr-489 folds into the KASH domain. Residues Tyr-460 to Leu-480 traverse the membrane as a helical segment.

In terms of assembly, homodimer and heterodimer with WIP2. Component of Ran complexes at least composed of WIT1 or WIT2, RANGAP1 or RANGAP2, and WIP1 or WIP2 or WIP3. Interacts with RANGAP1, RANGAP2, WPP1/MAF1, and WPP2/MAF2. Interacts with SUN1 and SUN2. Interacts with KIN1. Core component of the LINC complex which is composed of inner nuclear membrane SUN domain-containing proteins coupled to outer nuclear membrane WIP and WIT proteins. The LINC complex also involves nucleoskeletal proteins CRWN/LINC and possibly KAKU4 and the cytoskeletal myosin KAKU1. Interacts with WIT1 and SUN2. Interacts with WIT2. Interacts with SUN3. Expressed in seedlings, roots, stems, leaves, and flowers.

Its subcellular location is the nucleus envelope. It is found in the nucleus membrane. Mediates and enhances the nuclear envelope docking of RANGAP proteins mediated by WIT1 and WIT2 in the undifferentiated cells of root tips. As component of the SUN-WIP-WIT2-KAKU1 complex, mediates the transfer of cytoplasmic forces to the nuclear envelope (NE), leading to nuclear shape changes. The polypeptide is WPP domain-interacting protein 1 (WIP1) (Arabidopsis thaliana (Mouse-ear cress)).